The chain runs to 467 residues: Ethanolamine-phosphate phospho-lyase homolog 1 (467 aa).

An N6-(pyridoxal phosphate)lysine modification is found at lysine 307.

This sequence belongs to the class-III pyridoxal-phosphate-dependent aminotransferase family. The cofactor is pyridoxal 5'-phosphate.

This Caenorhabditis elegans protein is Ethanolamine-phosphate phospho-lyase homolog 1.